The sequence spans 535 residues: Prolyl 4-hydroxylase subunit alpha-2 (535 aa).

Residues 1–21 (MKLWVSALLMAWFGVLSCVQA) form the signal peptide. N115 carries an N-linked (GlcNAc...) asparagine glycan. The stretch at 207 to 240 (SQVLDYLSYAVFQLGDLHRALELTRRLLSLDPSH) is one TPR repeat. N-linked (GlcNAc...) asparagine glycosylation is present at N264. The Fe2OG dioxygenase domain occupies 412–520 (TAELLQVANY…KWVSNKWFHE (109 aa)). H430 and D432 together coordinate Fe cation. K480 is modified (N6-succinyllysine). H501 lines the Fe cation pocket. Residue K511 coordinates 2-oxoglutarate.

Belongs to the P4HA family. As to quaternary structure, heterotetramer of two alpha-2 chains and two beta chains (P4HB) (the beta chain is the multi-functional PDI), where P4HB plays the role of a structural subunit; this tetramer catalyzes the formation of 4-hydroxyproline in collagen. It depends on Fe(2+) as a cofactor. Requires L-ascorbate as cofactor. As to expression, expressed in the heart, placenta, lung and pancreas.

The protein resides in the endoplasmic reticulum lumen. It catalyses the reaction L-prolyl-[collagen] + 2-oxoglutarate + O2 = trans-4-hydroxy-L-prolyl-[collagen] + succinate + CO2. Its activity is regulated as follows. Inhibited by poly(L-proline) only at very high concentrations. Catalyzes the post-translational formation of 4-hydroxyproline in -Xaa-Pro-Gly- sequences in collagens and other proteins. The polypeptide is Prolyl 4-hydroxylase subunit alpha-2 (P4HA2) (Homo sapiens (Human)).